We begin with the raw amino-acid sequence, 267 residues long: Small ribosomal subunit protein uS3 (267 aa).

Residues 39–114 (IRKYLETNLK…RVNINIVEIR (76 aa)) form the KH type-2 domain. The segment covering 229–248 (ANNRGRGNNRGRGNSRQNGG) has biased composition (low complexity). Positions 229–267 (ANNRGRGNNRGRGNSRQNGGRSRRPRQGQASTQGRGGNN) are disordered.

It belongs to the universal ribosomal protein uS3 family. In terms of assembly, part of the 30S ribosomal subunit. Forms a tight complex with proteins S10 and S14.

In terms of biological role, binds the lower part of the 30S subunit head. Binds mRNA in the 70S ribosome, positioning it for translation. The sequence is that of Small ribosomal subunit protein uS3 from Oenococcus oeni (strain ATCC BAA-331 / PSU-1).